A 141-amino-acid chain; its full sequence is Hemoglobin subunit alpha-D (141 aa).

The region spanning 1–141 (MLTADDKKLI…VAAVLAEKYR (141 aa)) is the Globin domain. Heme b is bound by residues histidine 58 and histidine 87.

This sequence belongs to the globin family. In terms of assembly, heterotetramer of two alpha-D chains and two beta chains. As to expression, red blood cells.

Its function is as follows. Involved in oxygen transport from the lung to the various peripheral tissues. In Aegypius monachus (Cinereous vulture), this protein is Hemoglobin subunit alpha-D (HBAD).